The sequence spans 443 residues: Aspartate--tRNA(Asp/Asn) ligase (443 aa).

Glu-175 provides a ligand contact to L-aspartate. Positions 197–200 (QLFK) are aspartate. Arg-219 contributes to the L-aspartate binding site. ATP contacts are provided by residues 219–221 (RAE), 227–229 (RHL), and Glu-366. 2 residues coordinate Mg(2+): Glu-366 and Ser-369. Ser-369 and Arg-373 together coordinate L-aspartate. An ATP-binding site is contributed by 414 to 417 (GCER).

Belongs to the class-II aminoacyl-tRNA synthetase family. Type 2 subfamily. In terms of assembly, homodimer. The cofactor is Mg(2+).

The protein resides in the cytoplasm. The catalysed reaction is tRNA(Asx) + L-aspartate + ATP = L-aspartyl-tRNA(Asx) + AMP + diphosphate. Its function is as follows. Aspartyl-tRNA synthetase with relaxed tRNA specificity since it is able to aspartylate not only its cognate tRNA(Asp) but also tRNA(Asn). Reaction proceeds in two steps: L-aspartate is first activated by ATP to form Asp-AMP and then transferred to the acceptor end of tRNA(Asp/Asn). The polypeptide is Aspartate--tRNA(Asp/Asn) ligase (Methanococcoides burtonii (strain DSM 6242 / NBRC 107633 / OCM 468 / ACE-M)).